The sequence spans 132 residues: MDLPYYHGCLTKRECEALLLKGGVDGNFLIRDSESVPGALCLCVSFKKLVYNYRIFREKNGYYRIETEPSTPKTIFPNLEELISKFKTPGQGMVVHLSNPIMRSGFCPGARRLNLEANVYENTDEEYVDVLP.

The SH2 domain occupies 5-101 (YYHGCLTKRE…GMVVHLSNPI (97 aa)).

In terms of assembly, interacts with SLAMF1 (phosphorylated). Interacts with CD244. Interacts with Src kinases HCK, LYN, FYN, FGR and LCK (via kinase domains). As to expression, expressed in spleen. Expressed in macrophages, CD8(+) T-Cells and NK cells. Conflictingly found only in NK cells.

It is found in the cytoplasm. Cytoplasmic adapter regulating receptors of the signaling lymphocytic activation molecule (SLAM) family. In SLAM signaling may cooperate with Sh2d1a/SAP. Plays a role in regulation of effector functions of natural killer (NK) cells by controlling signal transduction through Cd244/2b4. However, conflicting results are reported which may reflect the use of different strain backgrounds. Proposed to act as an inhibitor of Cd244-mediated NK cell function including cytotoxicity and IFN-gamma production, the latter found also by triggering Klra4 and Klrk1 next to Cd244. Seems to positively regulate Cd244- and Cd84-dependent NK cell functions implicating Cd244-mediated phosphorylation of Vav1. The protein is SH2 domain-containing protein 1B2 (Sh2d1b2) of Mus musculus (Mouse).